A 207-amino-acid chain; its full sequence is Probable nicotinate-nucleotide adenylyltransferase (207 aa).

The protein belongs to the NadD family.

It catalyses the reaction nicotinate beta-D-ribonucleotide + ATP + H(+) = deamido-NAD(+) + diphosphate. It functions in the pathway cofactor biosynthesis; NAD(+) biosynthesis; deamido-NAD(+) from nicotinate D-ribonucleotide: step 1/1. Catalyzes the reversible adenylation of nicotinate mononucleotide (NaMN) to nicotinic acid adenine dinucleotide (NaAD). The protein is Probable nicotinate-nucleotide adenylyltransferase of Synechococcus sp. (strain JA-3-3Ab) (Cyanobacteria bacterium Yellowstone A-Prime).